A 171-amino-acid chain; its full sequence is NADH-quinone oxidoreductase subunit I 2 (171 aa).

4Fe-4S ferredoxin-type domains lie at Ile-39–Ala-71 and Glu-81–Asp-110. 8 residues coordinate [4Fe-4S] cluster: Cys-51, Cys-54, Cys-57, Cys-61, Cys-90, Cys-93, Cys-96, and Cys-100.

This sequence belongs to the complex I 23 kDa subunit family. As to quaternary structure, NDH-1 is composed of 14 different subunits. Subunits NuoA, H, J, K, L, M, N constitute the membrane sector of the complex. Requires [4Fe-4S] cluster as cofactor.

It is found in the cell inner membrane. It carries out the reaction a quinone + NADH + 5 H(+)(in) = a quinol + NAD(+) + 4 H(+)(out). NDH-1 shuttles electrons from NADH, via FMN and iron-sulfur (Fe-S) centers, to quinones in the respiratory chain. The immediate electron acceptor for the enzyme in this species is believed to be ubiquinone. Couples the redox reaction to proton translocation (for every two electrons transferred, four hydrogen ions are translocated across the cytoplasmic membrane), and thus conserves the redox energy in a proton gradient. The protein is NADH-quinone oxidoreductase subunit I 2 of Rhodopseudomonas palustris (strain BisB18).